The following is a 222-amino-acid chain: Eukaryotic translation initiation factor 3 subunit K (222 aa).

The region spanning 46–208 (YDLEANLAVL…KIKTKNITEK (163 aa)) is the PCI domain.

It belongs to the eIF-3 subunit K family. In terms of assembly, component of the eukaryotic translation initiation factor 3 (eIF-3) complex. The eIF-3 complex interacts with pix.

It is found in the cytoplasm. Its function is as follows. Component of the eukaryotic translation initiation factor 3 (eIF-3) complex, which is involved in protein synthesis of a specialized repertoire of mRNAs and, together with other initiation factors, stimulates binding of mRNA and methionyl-tRNAi to the 40S ribosome. The eIF-3 complex specifically targets and initiates translation of a subset of mRNAs involved in cell proliferation. This Drosophila sechellia (Fruit fly) protein is Eukaryotic translation initiation factor 3 subunit K.